The chain runs to 521 residues: Medium/long-chain-fatty-acid--[acyl-carrier-protein] ligase MbtM (521 aa).

The tract at residues Arg146–Lys172 is disordered.

Belongs to the ATP-dependent AMP-binding enzyme family.

The catalysed reaction is a long-chain fatty acid + holo-[ACP] + ATP = a long-chain fatty acyl-[ACP] + AMP + diphosphate. It carries out the reaction a medium-chain fatty acid + holo-[ACP] + ATP = a medium-chain fatty acyl-[ACP] + AMP + diphosphate. It functions in the pathway siderophore biosynthesis; mycobactin biosynthesis. In terms of biological role, activates lipidic moieties required for mycobactin biosynthesis. Converts medium- to long-chain aliphatic fatty acids into acyl adenylate, which is further transferred on to the phosphopantetheine arm of the carrier protein MbtL. This Mycolicibacterium paratuberculosis (strain ATCC BAA-968 / K-10) (Mycobacterium paratuberculosis) protein is Medium/long-chain-fatty-acid--[acyl-carrier-protein] ligase MbtM (mbtM).